A 1372-amino-acid chain; its full sequence is DNA-directed RNA polymerase subunit beta' (1372 aa).

Residues Cys69, Cys71, Cys84, and Cys87 each coordinate Zn(2+). Residues Asp460, Asp462, and Asp464 each contribute to the Mg(2+) site. Residues Cys808, Cys882, Cys889, and Cys892 each contribute to the Zn(2+) site.

The protein belongs to the RNA polymerase beta' chain family. In terms of assembly, the RNAP catalytic core consists of 2 alpha, 1 beta, 1 beta' and 1 omega subunit. When a sigma factor is associated with the core the holoenzyme is formed, which can initiate transcription. Mg(2+) serves as cofactor. Requires Zn(2+) as cofactor.

It catalyses the reaction RNA(n) + a ribonucleoside 5'-triphosphate = RNA(n+1) + diphosphate. In terms of biological role, DNA-dependent RNA polymerase catalyzes the transcription of DNA into RNA using the four ribonucleoside triphosphates as substrates. In Rickettsia bellii (strain OSU 85-389), this protein is DNA-directed RNA polymerase subunit beta'.